The following is a 472-amino-acid chain: Dihydrolipoyl dehydrogenase 2 (472 aa).

Residues 39 to 47, K56, and A118 contribute to the FAD site; that span reads ERDAYGGTC. The cysteines at positions 47 and 52 are disulfide-linked. NAD(+) is bound by residues 186–190, E209, and 275–278; these read GAGYI and AVGR. Residues D318 and A326 each coordinate FAD. The Proton acceptor role is filled by H450.

This sequence belongs to the class-I pyridine nucleotide-disulfide oxidoreductase family. Homodimer. Requires FAD as cofactor.

The protein resides in the cytoplasm. It carries out the reaction N(6)-[(R)-dihydrolipoyl]-L-lysyl-[protein] + NAD(+) = N(6)-[(R)-lipoyl]-L-lysyl-[protein] + NADH + H(+). The chain is Dihydrolipoyl dehydrogenase 2 (lpdA2) from Haloarcula marismortui (strain ATCC 43049 / DSM 3752 / JCM 8966 / VKM B-1809) (Halobacterium marismortui).